The chain runs to 348 residues: Dihydroorotase (348 aa).

2 residues coordinate Zn(2+): histidine 13 and histidine 15. Substrate contacts are provided by residues 15 to 17 (HLR) and asparagine 41. Residues lysine 99, histidine 136, and histidine 174 each contribute to the Zn(2+) site. Lysine 99 bears the N6-carboxylysine mark. Histidine 136 serves as a coordination point for substrate. Residue leucine 219 participates in substrate binding. Aspartate 247 contacts Zn(2+). Aspartate 247 is a catalytic residue. Positions 251 and 263 each coordinate substrate.

It belongs to the metallo-dependent hydrolases superfamily. DHOase family. Class II DHOase subfamily. In terms of assembly, homodimer. The cofactor is Zn(2+).

It carries out the reaction (S)-dihydroorotate + H2O = N-carbamoyl-L-aspartate + H(+). Its pathway is pyrimidine metabolism; UMP biosynthesis via de novo pathway; (S)-dihydroorotate from bicarbonate: step 3/3. Functionally, catalyzes the reversible cyclization of carbamoyl aspartate to dihydroorotate. The protein is Dihydroorotase of Coxiella burnetii (strain RSA 331 / Henzerling II).